A 494-amino-acid polypeptide reads, in one-letter code: Guanosine-5'-triphosphate,3'-diphosphate pyrophosphatase (494 aa).

This sequence belongs to the GppA/Ppx family. GppA subfamily.

The catalysed reaction is guanosine 3'-diphosphate 5'-triphosphate + H2O = guanosine 3',5'-bis(diphosphate) + phosphate + H(+). The protein operates within purine metabolism; ppGpp biosynthesis; ppGpp from GTP: step 2/2. In terms of biological role, catalyzes the conversion of pppGpp to ppGpp. Guanosine pentaphosphate (pppGpp) is a cytoplasmic signaling molecule which together with ppGpp controls the 'stringent response', an adaptive process that allows bacteria to respond to amino acid starvation, resulting in the coordinated regulation of numerous cellular activities. The chain is Guanosine-5'-triphosphate,3'-diphosphate pyrophosphatase from Citrobacter koseri (strain ATCC BAA-895 / CDC 4225-83 / SGSC4696).